Reading from the N-terminus, the 168-residue chain is uncharacterized protein (168 aa).

The chain crosses the membrane as a helical span at residues 36 to 56 (LNWWQLIVVVGIAISGIAAIA). N-linked (GlcNAc...) asparagine; by host glycosylation is present at asparagine 74. 3 consecutive transmembrane segments (helical) span residues 86–106 (FIII…LAWL), 115–135 (KLLT…ALTI), and 143–163 (MVKL…GFFI). An N-linked (GlcNAc...) asparagine; by host glycan is attached at asparagine 164.

The protein resides in the membrane. This is an uncharacterized protein from Acanthamoeba polyphaga mimivirus (APMV).